Reading from the N-terminus, the 250-residue chain is Ribonuclease HII (250 aa).

An RNase H type-2 domain is found at 66–250; the sequence is QLVAGVDEVG…SFAPVSEYEK (185 aa). A divalent metal cation contacts are provided by Asp-72, Glu-73, and Asp-164.

This sequence belongs to the RNase HII family. Requires Mn(2+) as cofactor. It depends on Mg(2+) as a cofactor.

The protein localises to the cytoplasm. The enzyme catalyses Endonucleolytic cleavage to 5'-phosphomonoester.. Functionally, endonuclease that specifically degrades the RNA of RNA-DNA hybrids. This chain is Ribonuclease HII, found in Lactobacillus johnsonii (strain CNCM I-12250 / La1 / NCC 533).